The chain runs to 287 residues: Cysteine-rich repeat secretory protein 58 (287 aa).

Residues 1 to 20 (METTKKLFALLCLFVTMNQA) form the signal peptide. Over 21 to 267 (ISVSDPDDME…GSFSHRGNNK (247 aa)) the chain is Extracellular. Gnk2-homologous domains follow at residues 28–130 (DMET…DKFF) and 135–246 (ETNP…TYNS). N-linked (GlcNAc...) asparagine glycosylation is found at Asn-39, Asn-43, Asn-59, Asn-68, Asn-89, Asn-99, Asn-107, Asn-208, and Asn-245. Residues 268–286 (LLGGMVLAVSVSVFAFLSL) traverse the membrane as a helical segment. Position 287 (Val-287) is a topological domain, cytoplasmic.

Belongs to the cysteine-rich repeat secretory protein family.

The protein resides in the membrane. The protein is Cysteine-rich repeat secretory protein 58 (CRRSP58) of Arabidopsis thaliana (Mouse-ear cress).